Here is a 210-residue protein sequence, read N- to C-terminus: Regulator of G-protein signaling 17 (210 aa).

The segment at 1–21 (MRKRQQSQNEGTSAVSQAPGN) is disordered. The RGS domain occupies 84 to 200 (NFDKMMKTPA…LNSQIYKSLV (117 aa)).

Interacts with GNAI1 and GNAQ. Interacts with GNAZ and GNAI2. Forms a complex with mu-opioid receptors and G(alpha)z/i2 subunits, including GNAZ and GNAI2; the formation of this complex results in mu-opioid receptor desensitization. N- and O-glycosylated in synapsomal membranes. Post-translationally, serine phosphorylated in synapsomal membranes. In terms of processing, sumoylated with SUMO1 and SUM02 in synaptosomes. The sumoylated forms act as a scaffold for sequestering mu-opioid receptor-activated G(alpha) subunits.

It is found in the membrane. The protein localises to the synapse. The protein resides in the synaptosome. Its subcellular location is the nucleus. It localises to the cytoplasm. In terms of biological role, regulates G protein-coupled receptor signaling cascades, including signaling via muscarinic acetylcholine receptor CHRM2 and dopamine receptor DRD2. Inhibits signal transduction by increasing the GTPase activity of G protein alpha subunits, thereby driving them into their inactive GDP-bound form. Binds selectively to GNAZ and GNAI2 subunits, accelerates their GTPase activity and regulates their signaling activities. Negatively regulates mu-opioid receptor-mediated activation of the G-proteins. This Gallus gallus (Chicken) protein is Regulator of G-protein signaling 17 (RGS17).